The following is a 164-amino-acid chain: ATP synthase subunit b (164 aa).

Residues 7–25 (SFWLAVSFIIFVYLIYRPA) form a helical membrane-spanning segment.

This sequence belongs to the ATPase B chain family. F-type ATPases have 2 components, F(1) - the catalytic core - and F(0) - the membrane proton channel. F(1) has five subunits: alpha(3), beta(3), gamma(1), delta(1), epsilon(1). F(0) has three main subunits: a(1), b(2) and c(10-14). The alpha and beta chains form an alternating ring which encloses part of the gamma chain. F(1) is attached to F(0) by a central stalk formed by the gamma and epsilon chains, while a peripheral stalk is formed by the delta and b chains.

It localises to the cell inner membrane. Functionally, f(1)F(0) ATP synthase produces ATP from ADP in the presence of a proton or sodium gradient. F-type ATPases consist of two structural domains, F(1) containing the extramembraneous catalytic core and F(0) containing the membrane proton channel, linked together by a central stalk and a peripheral stalk. During catalysis, ATP synthesis in the catalytic domain of F(1) is coupled via a rotary mechanism of the central stalk subunits to proton translocation. Its function is as follows. Component of the F(0) channel, it forms part of the peripheral stalk, linking F(1) to F(0). In Rickettsia felis (strain ATCC VR-1525 / URRWXCal2) (Rickettsia azadi), this protein is ATP synthase subunit b.